Consider the following 539-residue polypeptide: MTKYIFVTGGVVSSLGKGITASSLGRLLKNRGLKVTMQKFDPYINIDPGTMNPYQHGEVYVTDDGTEADLDLGHYERIVDVRTSKYSNVTTGKIYQEVLEKERRGDYHGATVQVIPHITNMIKKKIMRAALTTDSDVIISEIGGTVGDIESTPFMEAIRQMRREVGEDNVMYIHCTLVPLLHAAHEMKTKPTQHSVAELRSIGIQPNMLVLRAEQPIDQEHKDKISDFTDVPVDRIIESIDAPSLFDVPLEFQKQGMDQKVCDFLHLESPKPEADMEAWKKLDERAKNLEHKTKITLVGKYVELEDAYISVTDALQHAGYLYNTKIEVDKVQAEDITEDNIAEIMKDSDGLIVPGGFGTRGLEGMITAIKYARENDIPFLGICLGMQMASVEFARNVLNLEDANSAEAEPNCKNNIIDIMADKRDEENIGGTLRLGLYPATLKEGTKTREAYDNQDVIQERHRHRFEFNNKYREAFEKAGMVFSGVSPDNRLVEIIELPKKKFFIAAQYHPEFLSRPQRPEGLFKSFIGAASGLPAQKF.

The amidoligase domain stretch occupies residues 1–267 (MTKYIFVTGG…DQKVCDFLHL (267 aa)). Ser13 provides a ligand contact to CTP. Ser13 is a UTP binding site. An ATP-binding site is contributed by 14 to 19 (SLGKGI). L-glutamine is bound at residue Tyr54. Asp71 is an ATP binding site. Mg(2+)-binding residues include Asp71 and Glu141. Residues 148 to 150 (DIE), 188 to 193 (KTKPTQ), and Lys224 contribute to the CTP site. UTP is bound by residues 188 to 193 (KTKPTQ) and Lys224. Residues 294-537 (KITLVGKYVE…IGAASGLPAQ (244 aa)) form the Glutamine amidotransferase type-1 domain. Gly356 is an L-glutamine binding site. The active-site Nucleophile; for glutamine hydrolysis is Cys383. Residues 384-387 (LGMQ), Glu407, and Arg465 contribute to the L-glutamine site. Residues His510 and Glu512 contribute to the active site.

This sequence belongs to the CTP synthase family. Homotetramer.

The catalysed reaction is UTP + L-glutamine + ATP + H2O = CTP + L-glutamate + ADP + phosphate + 2 H(+). The enzyme catalyses L-glutamine + H2O = L-glutamate + NH4(+). It carries out the reaction UTP + NH4(+) + ATP = CTP + ADP + phosphate + 2 H(+). Its pathway is pyrimidine metabolism; CTP biosynthesis via de novo pathway; CTP from UDP: step 2/2. Allosterically activated by GTP, when glutamine is the substrate; GTP has no effect on the reaction when ammonia is the substrate. The allosteric effector GTP functions by stabilizing the protein conformation that binds the tetrahedral intermediate(s) formed during glutamine hydrolysis. Inhibited by the product CTP, via allosteric rather than competitive inhibition. Its function is as follows. Catalyzes the ATP-dependent amination of UTP to CTP with either L-glutamine or ammonia as the source of nitrogen. Regulates intracellular CTP levels through interactions with the four ribonucleotide triphosphates. The chain is CTP synthase from Lactobacillus acidophilus (strain ATCC 700396 / NCK56 / N2 / NCFM).